The following is a 388-amino-acid chain: Succinate--CoA ligase [ADP-forming] subunit beta (388 aa).

Residues Lys46, 53–55 (GRG), Glu99, Cys102, and Glu107 contribute to the ATP site. Mg(2+)-binding residues include Asn199 and Asp213. Residues Asn264 and 321 to 323 (GIV) each bind substrate.

It belongs to the succinate/malate CoA ligase beta subunit family. Heterotetramer of two alpha and two beta subunits. Mg(2+) is required as a cofactor.

It carries out the reaction succinate + ATP + CoA = succinyl-CoA + ADP + phosphate. It catalyses the reaction GTP + succinate + CoA = succinyl-CoA + GDP + phosphate. It participates in carbohydrate metabolism; tricarboxylic acid cycle; succinate from succinyl-CoA (ligase route): step 1/1. In terms of biological role, succinyl-CoA synthetase functions in the citric acid cycle (TCA), coupling the hydrolysis of succinyl-CoA to the synthesis of either ATP or GTP and thus represents the only step of substrate-level phosphorylation in the TCA. The beta subunit provides nucleotide specificity of the enzyme and binds the substrate succinate, while the binding sites for coenzyme A and phosphate are found in the alpha subunit. The protein is Succinate--CoA ligase [ADP-forming] subunit beta of Actinobacillus pleuropneumoniae serotype 5b (strain L20).